Reading from the N-terminus, the 556-residue chain is Tripartite motif-containing protein 16 (556 aa).

The disordered stretch occupies residues 1 to 60 (MAELDLIAPGPLTGVTAHPLAPLGPDPVSAIPVEKEDADPLSKSGEETQEQGHDPAELGA). Residues 33 to 56 (VEKEDADPLSKSGEETQEQGHDPA) show a composition bias toward basic and acidic residues. 2 B box-type zinc fingers span residues 64 to 113 (EDQI…LTEP) and 117 to 156 (QDLR…STVS). S107 carries the post-translational modification Phosphoserine. 2 coiled-coil regions span residues 163–266 (NKEV…RLAA) and 312–332 (NLIQ…REEE). S195 bears the Phosphoserine mark. A B30.2/SPRY domain is found at 347–545 (YRTSKPEPRT…RIVDLGEEPE (199 aa)).

The protein belongs to the TRIM/RBCC family. As to quaternary structure, homodimerizes via its coiled-coil domain. Heterodimerizes with MID1, TRIM24 and PML. Interacts with Galectin-3/LGALS3 in a ULK1-dependent manner; this interaction mediates autophagy of damage endomembranes. Interacts with BECN1. Interacts with ATG16L1. Interacts with p62/SQSTM and LC3B/MAP1LC3B. In terms of processing, phosphorylated by ULK1. Post-translationally, auto-ubiquitinates via its B-Boxes. In terms of tissue distribution, widely expressed. Expressed in basal keratinocytes.

The protein localises to the cytoplasm. The enzyme catalyses S-ubiquitinyl-[E2 ubiquitin-conjugating enzyme]-L-cysteine + [acceptor protein]-L-lysine = [E2 ubiquitin-conjugating enzyme]-L-cysteine + N(6)-ubiquitinyl-[acceptor protein]-L-lysine.. Functionally, E3 ubiquitin ligase that plays an essential role in the organization of autophagic response and ubiquitination upon lysosomal and phagosomal damages. Plays a role in the stress-induced biogenesis and degradation of protein aggresomes by regulating the p62-KEAP1-NRF2 signaling and particularly by modulating the ubiquitination levels and thus stability of NRF2. Acts as a scaffold protein and facilitates autophagic degradation of protein aggregates by interacting with p62/SQSTM, ATG16L1 and LC3B/MAP1LC3B. In turn, protects the cell against oxidative stress-induced cell death as a consequence of endomembrane damage. This Mus musculus (Mouse) protein is Tripartite motif-containing protein 16 (Trim16).